Reading from the N-terminus, the 28-residue chain is Aryl acylamidase (28 aa).

In terms of assembly, homodimer.

The enzyme catalyses an anilide + H2O = aniline + a carboxylate + H(+). This chain is Aryl acylamidase, found in Nocardia globerula.